Here is a 238-residue protein sequence, read N- to C-terminus: Phosphoglycolate phosphatase (238 aa).

Asp-8 functions as the Nucleophile in the catalytic mechanism. 2 residues coordinate Mg(2+): Asp-8 and Asp-10. A substrate-binding site is contributed by Lys-163. Mg(2+) is bound by residues Asp-186 and Asp-190.

This sequence belongs to the archaeal SPP-like hydrolase family. Mg(2+) is required as a cofactor.

The catalysed reaction is 2-phosphoglycolate + H2O = glycolate + phosphate. In terms of biological role, catalyzes the dephosphorylation of 2-phosphoglycolate. In Staphylothermus marinus (strain ATCC 43588 / DSM 3639 / JCM 9404 / F1), this protein is Phosphoglycolate phosphatase.